The primary structure comprises 623 residues: Actin-related protein 8 (623 aa).

Residues 1 to 24 (MTQTDRDAENGRDREKDREKEQQR) show a composition bias toward basic and acidic residues. The interval 1–29 (MTQTDRDAENGRDREKDREKEQQRGVKRP) is disordered. An ATP-binding site is contributed by 283–286 (DVGD). The segment covering 428 to 438 (TQSKQDQSSKA) has biased composition (low complexity). Residues 428–458 (TQSKQDQSSKASADRKSFPKPSSFEGESSVC) are disordered.

The protein belongs to the actin family. ARP8 subfamily. Component of the chromatin remodeling INO80 complex; specifically part of a complex module associated with the DBINO domain of INO80. Exists as monomers and dimers, but the dimer is most probably the biologically relevant form required for stable interactions with histones that exploits the twofold symmetry of the nucleosome core.

Its subcellular location is the nucleus. It localises to the chromosome. In terms of biological role, plays an important role in the functional organization of mitotic chromosomes. Exhibits low basal ATPase activity, and unable to polymerize. Its function is as follows. Proposed core component of the chromatin remodeling INO80 complex which is involved in transcriptional regulation, DNA replication and probably DNA repair. Required for the recruitment of INO80 (and probably the INO80 complex) to sites of DNA damage Strongly prefer nucleosomes and H3-H4 tetramers over H2A-H2B dimers, suggesting it may act as a nucleosome recognition module within the complex. This Danio rerio (Zebrafish) protein is Actin-related protein 8 (actr8).